We begin with the raw amino-acid sequence, 316 residues long: Olfactory receptor 10H28 (316 aa).

Residues 1-26 (MPGQNYSTISEFILFGFSAFPHQMLP) lie on the Extracellular side of the membrane. N-linked (GlcNAc...) asparagine glycosylation occurs at asparagine 5. A helical transmembrane segment spans residues 27–47 (ALFLLYLLMYLFTLLGNLVIM). The Cytoplasmic portion of the chain corresponds to 48-57 (AAIWTEHRLH). Residues 58–78 (TPMYLFLCALSISEILFTVVI) traverse the membrane as a helical segment. Topologically, residues 79–100 (TPRMLSDMLSTHRSITFIACAN) are extracellular. The cysteines at positions 98 and 190 are disulfide-linked. The chain crosses the membrane as a helical span at residues 101–121 (QLFFSFTFGYTHSFLLVVMGY). Residues 122–144 (DRYVAICRPLHYHALMSLQGCAR) are Cytoplasmic-facing. A helical transmembrane segment spans residues 145–165 (LVAWSWAGGSLIGMALTIIIF). Over 166-207 (HLTFCESNVIHHILCHVFSLLKLACGERTAFVTIAVILVCVT) the chain is Extracellular. The helical transmembrane segment at 208-228 (PLIGCLVFIILSYIFIVAAIL) threads the bilayer. Topologically, residues 229–241 (RIPSTEGRHKTFS) are cytoplasmic. A helical transmembrane segment spans residues 242–262 (TCASHLTVVIVHYGFASIIYL). The Extracellular segment spans residues 263-273 (KSRGLYSQYTD). Residues 274–294 (TLMSTTYTVFTPFLSPIIFSL) form a helical membrane-spanning segment. Topologically, residues 295-316 (RNKELKNAIIKSFHRNVCQQSI) are cytoplasmic.

Belongs to the G-protein coupled receptor 1 family.

The protein resides in the cell membrane. Odorant receptor. The polypeptide is Olfactory receptor 10H28 (Mus musculus (Mouse)).